We begin with the raw amino-acid sequence, 734 residues long: Photosystem I P700 chlorophyll a apoprotein A2 (734 aa).

A run of 8 helical transmembrane segments spans residues 46–69 (IFAS…FHVA), 135–158 (LYTG…LHLQ), 175–199 (LNHH…HVAI), 273–291 (IAHH…GHMY), 330–353 (IHFQ…QHMY), 369–395 (AALY…IFFI), 417–439 (AIIS…LYVH), and 517–535 (FLVH…LILV). The [4Fe-4S] cluster site is built by C559 and C568. 2 helical membrane-spanning segments follow: residues 575 to 596 (AFYL…YWHW) and 643 to 665 (LSVW…MFLI). Chlorophyll a is bound by residues H654, M662, and Y670. Residue W671 participates in phylloquinone binding. A helical membrane pass occupies residues 707–727 (LVGLAHFSVGYIFTYAAFLIA).

It belongs to the PsaA/PsaB family. As to quaternary structure, the PsaA/B heterodimer binds the P700 chlorophyll special pair and subsequent electron acceptors. PSI consists of a core antenna complex that captures photons, and an electron transfer chain that converts photonic excitation into a charge separation. The eukaryotic PSI reaction center is composed of at least 11 subunits. Requires P700 is a chlorophyll a/chlorophyll a' dimer, A0 is one or more chlorophyll a, A1 is one or both phylloquinones and FX is a shared 4Fe-4S iron-sulfur center. as cofactor.

It is found in the plastid. The protein localises to the chloroplast thylakoid membrane. The enzyme catalyses reduced [plastocyanin] + hnu + oxidized [2Fe-2S]-[ferredoxin] = oxidized [plastocyanin] + reduced [2Fe-2S]-[ferredoxin]. Its function is as follows. PsaA and PsaB bind P700, the primary electron donor of photosystem I (PSI), as well as the electron acceptors A0, A1 and FX. PSI is a plastocyanin-ferredoxin oxidoreductase, converting photonic excitation into a charge separation, which transfers an electron from the donor P700 chlorophyll pair to the spectroscopically characterized acceptors A0, A1, FX, FA and FB in turn. Oxidized P700 is reduced on the lumenal side of the thylakoid membrane by plastocyanin. In Nymphaea alba (White water-lily), this protein is Photosystem I P700 chlorophyll a apoprotein A2.